Consider the following 219-residue polypeptide: ATP synthase delta chain, chloroplastic (219 aa).

The transit peptide at 1-33 (MLAAKSIAGPRAFKASAVRAAPKAGRRTVVVMA) directs the protein to the chloroplast.

The protein belongs to the ATPase delta chain family. As to quaternary structure, F-type ATPases have 2 components, F(1) - the catalytic core - and F(0) - the membrane proton channel. F(1) has five subunits: alpha(3), beta(3), gamma(1), delta(1), epsilon(1). F(0) has four main subunits: a(1), b(1), b'(1) and c(10-14). The alpha and beta chains form an alternating ring which encloses part of the gamma chain. F(1) is attached to F(0) by a central stalk formed by the gamma and epsilon chains, while a peripheral stalk is formed by the delta, b and b' chains.

It is found in the plastid. The protein localises to the chloroplast thylakoid membrane. F(1)F(0) ATP synthase produces ATP from ADP in the presence of a proton or sodium gradient. F-type ATPases consist of two structural domains, F(1) containing the extramembraneous catalytic core and F(0) containing the membrane proton channel, linked together by a central stalk and a peripheral stalk. During catalysis, ATP synthesis in the catalytic domain of F(1) is coupled via a rotary mechanism of the central stalk subunits to proton translocation. In terms of biological role, this protein seems to be part of the stalk that links CF(0) to CF(1). It either transmits conformational changes from CF(0) into CF(1) or is implicated in proton conduction. This chain is ATP synthase delta chain, chloroplastic, found in Chlamydomonas reinhardtii (Chlamydomonas smithii).